We begin with the raw amino-acid sequence, 106 residues long: Heat shock protein HspQ (106 aa).

The interval 80–106 (DEHLDNDSMDELSQSIRNQLQAPRLRN) is disordered. Polar residues predominate over residues 90–100 (ELSQSIRNQLQ).

The protein belongs to the HspQ family.

The protein resides in the cytoplasm. Its function is as follows. Involved in the degradation of certain denaturated proteins, including DnaA, during heat shock stress. The polypeptide is Heat shock protein HspQ (Proteus mirabilis (strain HI4320)).